Here is a 206-residue protein sequence, read N- to C-terminus: Large ribosomal subunit protein uL4 (206 aa).

The interval 63–97 is disordered; sequence MYKQKGTGRARHHSARAPQFRGGGKAHGPVVRSHE. The segment covering 64–77 has biased composition (basic residues); sequence YKQKGTGRARHHSA.

This sequence belongs to the universal ribosomal protein uL4 family. Part of the 50S ribosomal subunit.

In terms of biological role, one of the primary rRNA binding proteins, this protein initially binds near the 5'-end of the 23S rRNA. It is important during the early stages of 50S assembly. It makes multiple contacts with different domains of the 23S rRNA in the assembled 50S subunit and ribosome. Its function is as follows. Forms part of the polypeptide exit tunnel. In Rhizobium leguminosarum bv. trifolii (strain WSM2304), this protein is Large ribosomal subunit protein uL4.